The chain runs to 227 residues: 7-cyano-7-deazaguanine synthase (227 aa).

Residue 8–18 (LSGGLDSATVL) participates in ATP binding. Positions 191, 201, 204, and 207 each coordinate Zn(2+).

This sequence belongs to the QueC family. It depends on Zn(2+) as a cofactor.

It catalyses the reaction 7-carboxy-7-deazaguanine + NH4(+) + ATP = 7-cyano-7-deazaguanine + ADP + phosphate + H2O + H(+). The protein operates within purine metabolism; 7-cyano-7-deazaguanine biosynthesis. In terms of biological role, catalyzes the ATP-dependent conversion of 7-carboxy-7-deazaguanine (CDG) to 7-cyano-7-deazaguanine (preQ(0)). In Paramagnetospirillum magneticum (strain ATCC 700264 / AMB-1) (Magnetospirillum magneticum), this protein is 7-cyano-7-deazaguanine synthase.